Reading from the N-terminus, the 155-residue chain is Peptide deformylase 2 (155 aa).

C90 and H132 together coordinate Fe cation. The active site involves E133. Position 136 (H136) interacts with Fe cation.

It belongs to the polypeptide deformylase family. Fe(2+) is required as a cofactor.

It carries out the reaction N-terminal N-formyl-L-methionyl-[peptide] + H2O = N-terminal L-methionyl-[peptide] + formate. Removes the formyl group from the N-terminal Met of newly synthesized proteins. Requires at least a dipeptide for an efficient rate of reaction. N-terminal L-methionine is a prerequisite for activity but the enzyme has broad specificity at other positions. This Clostridium perfringens (strain 13 / Type A) protein is Peptide deformylase 2.